The sequence spans 698 residues: MEKYERIRVVGRGAFGIVHLCLRKADQKLVILKQIPVEQMTKEERQAAQNECQVLKLLNHPNVIEYYENFLEDKALMIAMEYAPGGTLAEFIQKRCNSLLEEETILHFFVQILLALHHVHTHLILHRDLKTQNILLDKHRMVVKIGDFGISKILSSKSKAYTVVGTPCYISPELCEGKPYNQKSDIWALGCVLYELASLKRAFEAANLPALVLKIMSGTFAPISDRYSPELRQLVLSLLSLEPAQRPPLSHIMAQPLCIRALLNIHTDVGSVRMRRAEKSLTPGPPIASGSTGSRATSARCRGVPRGPVRPAIPPPLSSVYAWGGGLSSPLRLPMLNTEVVQVAAGRTQKAGVTRSGRLILWEAPPLGAGGGTLLPGAVELPQPQFVSRFLEGQSGVTIKHVACGDLFTACLTDRGIIMTFGSGSNGCLGHGNLTDISQPTIVEALLGYEMVQVACGASHVLALSTDGELFAWGRGDGGRLGLGTRESHNCPQQVPVAPGQEAQRVVCGIDSSMILTSPGRVLACGSNRFNKLGLDHLSLDEEPVPYQQVEEALSFTPLGSAPLDQEPLLCVDLGTAHSAAITASGDCYTFGSNQHGQLGTSSRRVSRAPCRVQGLEGIKMVMVACGDAFTVAVGAEGEVYSWGKGTRGRLGRRDEDAGLPRPVQLDETHPYMVTSVSCCHGNTLLAVRSVTDEPVPP.

A Protein kinase domain is found at 4 to 258; sequence YERIRVVGRG…LSHIMAQPLC (255 aa). ATP is bound by residues 10–18 and K33; that span reads VGRGAFGIV. The Proton acceptor role is filled by D128. T162 carries the post-translational modification Phosphothreonine; by autocatalysis. Residues 278–309 are disordered; the sequence is EKSLTPGPPIASGSTGSRATSARCRGVPRGPV. The segment covering 288-309 has biased composition (low complexity); sequence ASGSTGSRATSARCRGVPRGPV. RCC1 repeat units follow at residues 416 to 467, 468 to 519, 520 to 585, 586 to 637, and 638 to 690; these read GIIM…LSTD, GELF…LTSP, GRVL…ITAS, GDCY…VGAE, and GEVY…AVRS.

It belongs to the protein kinase superfamily. NEK Ser/Thr protein kinase family. NIMA subfamily. Interacts with PKD2; may regulate PKD2 targeting to the cilium. Interacts with ANKS6. Component of a complex containing at least ANKS6, INVS, NEK8 and NPHP3. ANKS6 may organize complex assembly by linking INVS and NPHP3 to NEK8 and INVS may target the complex to the proximal ciliary axoneme. Interacts with ANKS3. The cofactor is Mg(2+). As to expression, kidney, liver, and testis.

The protein localises to the cytoplasm. It localises to the cytoskeleton. It is found in the cell projection. Its subcellular location is the cilium. The protein resides in the microtubule organizing center. The protein localises to the centrosome. It localises to the cilium axoneme. The catalysed reaction is L-seryl-[protein] + ATP = O-phospho-L-seryl-[protein] + ADP + H(+). It carries out the reaction L-threonyl-[protein] + ATP = O-phospho-L-threonyl-[protein] + ADP + H(+). Functionally, required for renal tubular integrity. May regulate local cytoskeletal structure in kidney tubule epithelial cells. May regulate ciliary biogenesis through targeting of proteins to the cilia. Plays a role in organogenesis and is involved in the regulation of the Hippo signaling pathway. This chain is Serine/threonine-protein kinase Nek8 (Nek8), found in Mus musculus (Mouse).